Here is a 727-residue protein sequence, read N- to C-terminus: Synaptic vesicle glycoprotein 2C (727 aa).

The interaction with SYT1 stretch occupies residues 1–57 (MEDSYKDRTSLMKGAKDIAKEVKKQTVKKVNQAVDRAQDEYTQRSYSRFQDEEDDDD). Topologically, residues 1–154 (MEDSYKDRTS…CGHGRFQWAL (154 aa)) are cytoplasmic. The tract at residues 22 to 128 (VKKQTVKKVN…DRRELESERR (107 aa)) is disordered. 2 positions are modified to phosphoserine: serine 75 and serine 76. Position 79 is a phosphothreonine (threonine 79). Over residues 113–128 (KGDEYKDRRELESERR) the composition is skewed to basic and acidic residues. The helical transmembrane segment at 155-175 (FFVLGMALMADGVEVFVVGFV) threads the bilayer. Residues 176–191 (LPSAETDLCIPNSGSG) are Extracellular-facing. A helical transmembrane segment spans residues 192 to 212 (WLGSIVYLGMMVGAFFWGGLA). Topologically, residues 213–226 (DKVGRKQSLLICMS) are cytoplasmic. A helical membrane pass occupies residues 227–247 (VNGFFAFLSSFVQGYGFFLVC). Residue arginine 248 is a topological domain, extracellular. A helical membrane pass occupies residues 249–269 (LLSGFGIGGAIPTVFSYFAEV). At 270–280 (LAREKRGEHLS) the chain is on the cytoplasmic side. The helical transmembrane segment at 281 to 301 (WLCMFWMIGGIYASAMAWAII) threads the bilayer. Over 302-320 (PHYGWSFSMGSAYQFHSWR) the chain is Extracellular. Residues 321-341 (VFVIVCALPCVSSVVALTFMP) traverse the membrane as a helical segment. Residues 342 to 437 (ESPRFLLEVG…PVRENTIKLT (96 aa)) lie on the Cytoplasmic side of the membrane. A helical transmembrane segment spans residues 438 to 458 (IVWFTLSFGYYGLSVWFPDVI). The Extracellular segment spans residues 459-578 (KHLQSDEYAL…CQITFDDDYS (120 aa)). Tyrosine 466 is subject to Phosphotyrosine. N-linked (GlcNAc...) asparagine glycosylation is found at asparagine 480, asparagine 484, asparagine 534, asparagine 559, and asparagine 565. A helical membrane pass occupies residues 579–599 (AYWIYFVNFLGTLAVLPGNIV). Topologically, residues 600 to 609 (SALLMDRIGR) are cytoplasmic. The helical transmembrane segment at 610–630 (LTMLGGSMVLSGISCFFLWFG) threads the bilayer. Topologically, residues 631 to 636 (TSESMM) are extracellular. Residues 637–657 (IGMLCLYNGLTISAWNSLDVV) traverse the membrane as a helical segment. Residues 658-670 (TVELYPTDRRATG) lie on the Cytoplasmic side of the membrane. A helical membrane pass occupies residues 671 to 693 (FGFLNALCKAAAVLGNLIFGSLV). The Extracellular portion of the chain corresponds to 694 to 697 (SITK). Residues 698–716 (AIPILLASTVLVCGGLVGL) form a helical membrane-spanning segment. The Cytoplasmic segment spans residues 717-727 (RLPDTRTQVLM).

This sequence belongs to the major facilitator superfamily. Interacts with SYT1 in a calcium-dependent manner. In terms of assembly, (Microbial infection) Interacts with C.botulinum neurotoxin type A (BoNT/A, botA). As to quaternary structure, (Microbial infection) Interacts with C.botulinum neurotoxin type D (BoNT/D, botD). N-glycosylated. In terms of tissue distribution, expressed in specific subsets of conventional synapses in the retina (at protein level). Expressed in diaphragm motor nerve terminals (at protein level). Expressed in a subset of hippocampus neurons (at protein level).

Its subcellular location is the cytoplasmic vesicle. It is found in the secretory vesicle. The protein resides in the synaptic vesicle membrane. In terms of biological role, plays a role in the control of regulated secretion in neural and endocrine cells, enhancing selectively low-frequency neurotransmission. Positively regulates vesicle fusion by maintaining the readily releasable pool of secretory vesicles. Its function is as follows. (Microbial infection) Receptor for C.botulinum neurotoxin type A (BoNT/A, botA); the toxin binds Sv2c via extracellular loop 4. Functionally, (Microbial infection) Possible receptor for C.botulinum neurotoxin type D (BoNT/D, botD). The chain is Synaptic vesicle glycoprotein 2C (Sv2c) from Mus musculus (Mouse).